A 511-amino-acid chain; its full sequence is Exodeoxyribonuclease 7 large subunit (511 aa).

It belongs to the XseA family. In terms of assembly, heterooligomer composed of large and small subunits.

It is found in the cytoplasm. It carries out the reaction Exonucleolytic cleavage in either 5'- to 3'- or 3'- to 5'-direction to yield nucleoside 5'-phosphates.. Bidirectionally degrades single-stranded DNA into large acid-insoluble oligonucleotides, which are then degraded further into small acid-soluble oligonucleotides. The polypeptide is Exodeoxyribonuclease 7 large subunit (Brucella suis biovar 1 (strain 1330)).